We begin with the raw amino-acid sequence, 236 residues long: Small ribosomal subunit protein uS3 (236 aa).

Positions Ile-39 to Arg-107 constitute a KH type-2 domain. The interval Ala-214–Ala-236 is disordered.

It belongs to the universal ribosomal protein uS3 family. In terms of assembly, part of the 30S ribosomal subunit. Forms a tight complex with proteins S10 and S14.

In terms of biological role, binds the lower part of the 30S subunit head. Binds mRNA in the 70S ribosome, positioning it for translation. In Brucella suis (strain ATCC 23445 / NCTC 10510), this protein is Small ribosomal subunit protein uS3.